We begin with the raw amino-acid sequence, 274 residues long: Large ribosomal subunit protein uL2cz/uL2cy (274 aa).

Disordered regions lie at residues 1–21 and 224–274; these read MAIH…VDSQ and NPVD…RRSK.

Belongs to the universal ribosomal protein uL2 family. As to quaternary structure, part of the 50S ribosomal subunit.

It is found in the plastid. Its subcellular location is the chloroplast. This Gossypium hirsutum (Upland cotton) protein is Large ribosomal subunit protein uL2cz/uL2cy (rpl2-A).